Reading from the N-terminus, the 387-residue chain is Protein mab-21-like 3 (387 aa).

Belongs to the mab-21 family.

This is Protein mab-21-like 3 (mab21L3) from Danio rerio (Zebrafish).